Reading from the N-terminus, the 29-residue chain is MMYLMPLLIVIVGCLALHCSDDDMPDGHA.

In Escherichia phage T7 (Bacteriophage T7), this protein is Protein 1.5.